A 242-amino-acid polypeptide reads, in one-letter code: Coiled-coil domain-containing protein 107 (242 aa).

The N-terminal stretch at 1–24 is a signal peptide; the sequence is MEGAGPVLSILGLLLVSAPFGVLG. A disordered region spans residues 27–62; the sequence is PSADLGAHPERGSQVSPGTTEPRRQPPPKDQRERAR. The segment covering 47–62 has biased composition (basic and acidic residues); it reads EPRRQPPPKDQRERAR. A helical membrane pass occupies residues 65 to 85; sequence SLSLGALYTAAVVAFVLFKCL. A coiled-coil region spans residues 97–132; it reads EKNKKKSSQSEQQLVQLTQQLAQTEQHLNHLMTQLD. Positions 186–210 are disordered; the sequence is KEDQEAGNSQAWEEPITWSPETRNL.

Its subcellular location is the membrane. This chain is Coiled-coil domain-containing protein 107 (Ccdc107), found in Mus musculus (Mouse).